We begin with the raw amino-acid sequence, 421 residues long: Aspartokinase (421 aa).

7–10 (KYGG) is a binding site for ATP. 25-30 (RIVATK) serves as a coordination point for substrate. Ser41 serves as a coordination point for ATP. Substrate is bound by residues 45-49 (DTTDE), Glu74, 125-126 (LD), 151-154 (RGGS), and Ser154. Residues 174–175 (SD), 180–185 (YTADPR), and Lys210 contribute to the ATP site. ACT domains lie at 267 to 343 (VTVL…YDDQ) and 349 to 421 (LVGA…GTGR). Substrate-binding positions include Asp274, 274–279 (DKPGEA), 292–294 (NID), Gln298, 360–361 (VT), 374–375 (NI), and 381–382 (SE).

This sequence belongs to the aspartokinase family. As to quaternary structure, tetramer consisting of 2 isoforms Alpha (catalytic and regulation) and of a homodimer of 2 isoforms Beta (regulation). The dimerization of the beta isoforms is stabilized by the bonding of threonine.

The enzyme catalyses L-aspartate + ATP = 4-phospho-L-aspartate + ADP. It functions in the pathway amino-acid biosynthesis; L-lysine biosynthesis via DAP pathway; (S)-tetrahydrodipicolinate from L-aspartate: step 1/4. The protein operates within amino-acid biosynthesis; L-methionine biosynthesis via de novo pathway; L-homoserine from L-aspartate: step 1/3. It participates in amino-acid biosynthesis; L-threonine biosynthesis; L-threonine from L-aspartate: step 1/5. Its activity is regulated as follows. Feedback inhibition by lysine and threonine, but he enzyme is moderately inhibited by lysine alone, and threonine alone has no effect. Functionally, catalyzes the phosphorylation of the beta-carboxyl group of aspartic acid with ATP to yield 4-phospho-L-aspartate, which is involved in the branched biosynthetic pathway leading to the biosynthesis of amino acids lysine, threonine, isoleucine and methionine. This is Aspartokinase (lysC) from Corynebacterium glutamicum (strain ATCC 13032 / DSM 20300 / JCM 1318 / BCRC 11384 / CCUG 27702 / LMG 3730 / NBRC 12168 / NCIMB 10025 / NRRL B-2784 / 534).